The sequence spans 212 residues: Adenylate kinase (212 aa).

10–15 (GAGKGT) contributes to the ATP binding site. An NMP region spans residues 30 to 59 (STGDMFRAAMANQTEMGRLAKSYIDKGELV). AMP is bound by residues Thr31, Arg36, 57–59 (ELV), 86–89 (GYPR), and Gln93. The segment at 127 to 159 (GRIINRKTGETFHKVFNPPVDYKEEDYYQREDD) is LID. ATP is bound by residues Arg128 and 137–138 (TF). AMP contacts are provided by Arg156 and Arg167. Residue Gln195 participates in ATP binding.

This sequence belongs to the adenylate kinase family. As to quaternary structure, monomer.

It localises to the cytoplasm. It catalyses the reaction AMP + ATP = 2 ADP. Its pathway is purine metabolism; AMP biosynthesis via salvage pathway; AMP from ADP: step 1/1. Catalyzes the reversible transfer of the terminal phosphate group between ATP and AMP. Plays an important role in cellular energy homeostasis and in adenine nucleotide metabolism. The protein is Adenylate kinase of Streptococcus pyogenes serotype M3 (strain ATCC BAA-595 / MGAS315).